Reading from the N-terminus, the 185-residue chain is Dual-action ribosomal maturation protein DarP (185 aa).

The tract at residues 1-22 is disordered; the sequence is MWKNGAMRGCNKETGEFLGPSR.

Belongs to the DarP family.

The protein resides in the cytoplasm. Its function is as follows. Member of a network of 50S ribosomal subunit biogenesis factors which assembles along the 30S-50S interface, preventing incorrect 23S rRNA structures from forming. Promotes peptidyl transferase center (PTC) maturation. The polypeptide is Dual-action ribosomal maturation protein DarP (Xylella fastidiosa (strain 9a5c)).